We begin with the raw amino-acid sequence, 497 residues long: Glutamate--tRNA ligase (497 aa).

Residues proline 13–threonine 23 carry the 'HIGH' region motif. The 'KMSKS' region signature appears at lysine 253–arginine 257. Lysine 256 provides a ligand contact to ATP.

This sequence belongs to the class-I aminoacyl-tRNA synthetase family. Glutamate--tRNA ligase type 1 subfamily. In terms of assembly, monomer.

It localises to the cytoplasm. The catalysed reaction is tRNA(Glu) + L-glutamate + ATP = L-glutamyl-tRNA(Glu) + AMP + diphosphate. In terms of biological role, catalyzes the attachment of glutamate to tRNA(Glu) in a two-step reaction: glutamate is first activated by ATP to form Glu-AMP and then transferred to the acceptor end of tRNA(Glu). This Cutibacterium acnes (strain DSM 16379 / KPA171202) (Propionibacterium acnes) protein is Glutamate--tRNA ligase.